A 645-amino-acid polypeptide reads, in one-letter code: Nucleolar GTP-binding protein 1 (645 aa).

Positions 168–340 constitute an OBG-type G domain; the sequence is RTLLICGYPN…VRNKACEKLL (173 aa). GTP-binding positions include 174-181, 220-224, and 288-291; these read GYPNVGKS, DTPGI, and NKTD. Positions 567–645 are disordered; sequence GQNDSMASGS…KRGIGKSDFR (79 aa). A compositionally biased stretch (basic and acidic residues) spans 612–624; that stretch reads NRDARQGEADRHA.

It belongs to the TRAFAC class OBG-HflX-like GTPase superfamily. OBG GTPase family. NOG subfamily.

It localises to the nucleus. The protein localises to the nucleolus. Its function is as follows. Involved in the biogenesis of the 60S ribosomal subunit. This Candida glabrata (strain ATCC 2001 / BCRC 20586 / JCM 3761 / NBRC 0622 / NRRL Y-65 / CBS 138) (Yeast) protein is Nucleolar GTP-binding protein 1 (NOG1).